Consider the following 290-residue polypeptide: 33 kDa chaperonin (290 aa).

Disulfide bonds link Cys235-Cys237 and Cys268-Cys271.

It belongs to the HSP33 family. Under oxidizing conditions two disulfide bonds are formed involving the reactive cysteines. Under reducing conditions zinc is bound to the reactive cysteines and the protein is inactive.

It is found in the cytoplasm. Its function is as follows. Redox regulated molecular chaperone. Protects both thermally unfolding and oxidatively damaged proteins from irreversible aggregation. Plays an important role in the bacterial defense system toward oxidative stress. This Streptococcus pyogenes serotype M3 (strain ATCC BAA-595 / MGAS315) protein is 33 kDa chaperonin.